A 147-amino-acid polypeptide reads, in one-letter code: Cyanate hydratase (147 aa).

Active-site residues include R88, E91, and S114.

This sequence belongs to the cyanase family.

The enzyme catalyses cyanate + hydrogencarbonate + 3 H(+) = NH4(+) + 2 CO2. Its function is as follows. Catalyzes the reaction of cyanate with bicarbonate to produce ammonia and carbon dioxide. The chain is Cyanate hydratase from Ralstonia pickettii (strain 12J).